A 520-amino-acid polypeptide reads, in one-letter code: Cytochrome P450 monooxygenase oblB (520 aa).

3 consecutive transmembrane segments (helical) span residues Val-17–Leu-37, Leu-229–Ala-249, and Ile-320–Val-340. Cys-462 is a heme binding site.

It belongs to the cytochrome P450 family. It depends on heme as a cofactor.

The protein resides in the membrane. Its pathway is secondary metabolite biosynthesis; terpenoid biosynthesis. In terms of biological role, cytochrome P450 monooxygenase; part of the gene cluster that mediates the biosynthesis of the sesterterpenes ophiobolins, fungal phytotoxins with potential anti-cancer activities. The first step of the pathway is performed by the sesterterpene synthase oblA that possesses both prenyl transferase and terpene cyclase activity, converting isopentenyl diphosphate and dimethylallyl diphosphate into geranylfarnesyl diphosphate (GFPP) and further converting GFPP into ophiobolin F, respectively. Other sesterterpenoids (C(25) terpenoids) are found as minor products of oblA. It is expected that ophiobolin F is then oxidized to ophiobolin A via ophiobolin C and ophiobolin B intermediates by the combined action of the cytochrome P450 monooxygenase oblB and the FAD-dependent oxidoreductase oblC. Although oblB catalyzes multistep oxygenations at C5 and C21/C7 in a relatively efficient manner, it is unable to convert ophiobolin F to ophiobolin C and produces instead several unexpected derivatives. The polypeptide is Cytochrome P450 monooxygenase oblB (Aspergillus clavatus (strain ATCC 1007 / CBS 513.65 / DSM 816 / NCTC 3887 / NRRL 1 / QM 1276 / 107)).